The primary structure comprises 239 residues: Ribonuclease 3 (239 aa).

In terms of domain architecture, RNase III spans 12-137; the sequence is RAKLESLIGH…LIAAIYLDGG (126 aa). E50 serves as a coordination point for Mg(2+). Residue D54 is part of the active site. Positions 123 and 126 each coordinate Mg(2+). The active site involves E126. Residues 162–231 form the DRBM domain; it reads DAKTELQEWS…ATKMLEREGI (70 aa).

This sequence belongs to the ribonuclease III family. As to quaternary structure, homodimer. Mg(2+) serves as cofactor.

The protein resides in the cytoplasm. The enzyme catalyses Endonucleolytic cleavage to 5'-phosphomonoester.. Digests double-stranded RNA. Involved in the processing of primary rRNA transcript to yield the immediate precursors to the large and small rRNAs (23S and 16S). Processes some mRNAs, and tRNAs when they are encoded in the rRNA operon. Processes pre-crRNA and tracrRNA of type II CRISPR loci if present in the organism. The protein is Ribonuclease 3 of Rhizobium etli (strain CIAT 652).